The sequence spans 344 residues: Large ribosomal subunit protein uL3 (344 aa).

Belongs to the universal ribosomal protein uL3 family. In terms of assembly, part of the 50S ribosomal subunit. Forms a cluster with proteins L14 and L24e.

In terms of biological role, one of the primary rRNA binding proteins, it binds directly near the 3'-end of the 23S rRNA, where it nucleates assembly of the 50S subunit. The polypeptide is Large ribosomal subunit protein uL3 (Aeropyrum pernix (strain ATCC 700893 / DSM 11879 / JCM 9820 / NBRC 100138 / K1)).